The chain runs to 1209 residues: Sterol 3-beta-glucosyltransferase (1209 aa).

The GRAM 1 domain maps to 167 to 217 (ERLIKKFLPNDDEKYIEEYPCWLLRDIMIQGHAYLTNKHLFFFAFIPNFES). The PH domain occupies 218-315 (DFNVTGSLRL…WVSSIKKQMF (98 aa)). In terms of domain architecture, GRAM 2 spans 568 to 634 (VRFRQHFSFD…EDVENCYKET (67 aa)). The UDP-alpha-D-glucose site is built by S745, R746, D748, N1019, V1048, H1050, H1063, S1066, G1067, T1068, D1087, and Q1088. A disordered region spans residues 1186–1209 (AKGNEKEEYSSEGSGSNDGSWLLI). Residues 1196–1209 (SEGSGSNDGSWLLI) are compositionally biased toward low complexity.

Belongs to the glycosyltransferase 28 family.

It localises to the cytoplasm. It is found in the membrane. The enzyme catalyses a sterol + UDP-alpha-D-glucose = a sterol 3-beta-D-glucoside + UDP + H(+). It carries out the reaction ergosterol + UDP-alpha-D-glucose = ergosteryl 3-beta-D-glucoside + UDP + H(+). Sterol glycosyltransferase responsible for the glycosylation of ergosterol to form ergosterol-glucoside. The chain is Sterol 3-beta-glucosyltransferase from Kluyveromyces lactis (strain ATCC 8585 / CBS 2359 / DSM 70799 / NBRC 1267 / NRRL Y-1140 / WM37) (Yeast).